A 539-amino-acid chain; its full sequence is Serine/threonine-protein kinase 35 (539 aa).

A disordered region spans residues 103-161 (ITIQGPAPPHLGARRRDEARGARAAPLLLPPPPAAMETGKENGARRGTKSPERKRRSPV). Residues 148–160 (RGTKSPERKRRSP) show a composition bias toward basic residues. The region spanning 207–535 (YSLLAEIGRG…FELETRMDQV (329 aa)) is the Protein kinase domain. Residues 213–221 (IGRGSYGVV) and lysine 236 each bind ATP. Catalysis depends on aspartate 365, which acts as the Proton acceptor.

It belongs to the protein kinase superfamily. Ser/Thr protein kinase family. As to quaternary structure, interacts with PDLIM1/CLP-36. Post-translationally, autophosphorylated.

Its subcellular location is the nucleus. The protein localises to the nucleolus. It is found in the cytoplasm. It carries out the reaction L-seryl-[protein] + ATP = O-phospho-L-seryl-[protein] + ADP + H(+). The enzyme catalyses L-threonyl-[protein] + ATP = O-phospho-L-threonyl-[protein] + ADP + H(+). The protein is Serine/threonine-protein kinase 35 (Stk35) of Mus musculus (Mouse).